Reading from the N-terminus, the 1181-residue chain is 1-phosphatidylinositol 4,5-bisphosphate phosphodiesterase beta-2 (1181 aa).

Positions 312 to 463 (QDMTQPLNHY…LRGKILIKNK (152 aa)) constitute a PI-PLC X-box domain. His-327 is a catalytic residue. Positions 328, 357, and 359 each coordinate Ca(2+). His-374 is an active-site residue. Residue Glu-408 participates in Ca(2+) binding. Residues 465-534 (NQFSGPASPS…EEIKKMQSDE (70 aa)) are disordered. The span at 503 to 525 (TEVEEEEVVEEEEEEESGNLDEE) shows a compositional bias: acidic residues. Positions 547 to 663 (MSSLVNYIQP…GYLLKHEFMR (117 aa)) constitute a PI-PLC Y-box domain. A C2 domain is found at 666–791 (DKQFNPFSVD…CLRSESNMAL (126 aa)). A disordered region spans residues 847–890 (SGTPVASQSNGAPVSAGNGSTAPGTKATGEEATKEVTEPQTASL). A compositionally biased stretch (polar residues) spans 850-869 (PVASQSNGAPVSAGNGSTAP). Residues 874-883 (TGEEATKEVT) are compositionally biased toward basic and acidic residues. A coiled-coil region spans residues 893-940 (LRELKGVVKLQRRHEKELRELERRGARRWEELLQRGAAQLAELQTQAA). Position 950 is a phosphoserine (Ser-950). Coiled-coil stretches lie at residues 974 to 1026 (PRVQ…AELK) and 1075 to 1141 (HIQE…VRAY). Residues 1149-1181 (EAEDKPERSCEASEESCPQEPLVSKADTQESRL) form a disordered region. Basic and acidic residues predominate over residues 1150–1159 (AEDKPERSCE).

In terms of assembly, interacts with RAC1. Forms a complex composed of at least WDR26, a G-beta:gamma unit, and PLCB2. The cofactor is Ca(2+).

The catalysed reaction is a 1,2-diacyl-sn-glycero-3-phospho-(1D-myo-inositol-4,5-bisphosphate) + H2O = 1D-myo-inositol 1,4,5-trisphosphate + a 1,2-diacyl-sn-glycerol + H(+). It carries out the reaction a 1,2-diacyl-sn-glycero-3-phospho-(1D-myo-inositol) + H2O = 1D-myo-inositol 1-phosphate + a 1,2-diacyl-sn-glycerol + H(+). The production of the second messenger molecules diacylglycerol (DAG) and inositol 1,4,5-trisphosphate (IP3) is mediated by activated phosphatidylinositol-specific phospholipase C enzymes. In neutrophils, participates in a phospholipase C-activating N-formyl peptide-activated GPCR (G protein-coupled receptor) signaling pathway by promoting RASGRP4 activation by DAG, to promote neutrophil functional responses. This is 1-phosphatidylinositol 4,5-bisphosphate phosphodiesterase beta-2 from Mus musculus (Mouse).